A 248-amino-acid polypeptide reads, in one-letter code: Something about silencing protein 5 (248 aa).

One can recognise a YEATS domain in the interval 1–139; it reads MDHSIEVTFR…SELSKYFDLP (139 aa). Ser-144 carries the post-translational modification Phosphoserine. The tract at residues 223-248 is disordered; it reads TKQERTNFGSDAIHKDEPVKAHNKLK.

As to quaternary structure, component of the SAS complex, at least composed of SAS2, SAS4 and SAS5. These three proteins constitute the core of the complex, and are sufficient to acetylate histones.

It localises to the nucleus. In terms of biological role, component of the SAS complex, a multiprotein complex that acetylates 'Lys-16' of histone H4 and 'Lys-14' of histone H3. The SAS complex is however unable to acetylate nucleosomal histones. The complex is involved in transcriptional silencing at telomeres and at HML locus. Also involved in rDNA silencing. In the complex, SAS5 is required for maximal histone acetyltransferase (HAT) activity of the complex, suggesting that it may be required to stabilize the complex or help in substrate recognition. The polypeptide is Something about silencing protein 5 (SAS5) (Saccharomyces cerevisiae (strain ATCC 204508 / S288c) (Baker's yeast)).